A 332-amino-acid chain; its full sequence is Biotin synthase (332 aa).

In terms of domain architecture, Radical SAM core spans 46 to 275 (YYGKKVKLNM…SKEIRISGGR (230 aa)). 3 residues coordinate [4Fe-4S] cluster: Cys-64, Cys-68, and Cys-71. [2Fe-2S] cluster-binding residues include Cys-108, Cys-140, Cys-200, and Arg-270.

This sequence belongs to the radical SAM superfamily. Biotin synthase family. Homodimer. It depends on [4Fe-4S] cluster as a cofactor. [2Fe-2S] cluster serves as cofactor.

It carries out the reaction (4R,5S)-dethiobiotin + (sulfur carrier)-SH + 2 reduced [2Fe-2S]-[ferredoxin] + 2 S-adenosyl-L-methionine = (sulfur carrier)-H + biotin + 2 5'-deoxyadenosine + 2 L-methionine + 2 oxidized [2Fe-2S]-[ferredoxin]. The protein operates within cofactor biosynthesis; biotin biosynthesis; biotin from 7,8-diaminononanoate: step 2/2. Its function is as follows. Catalyzes the conversion of dethiobiotin (DTB) to biotin by the insertion of a sulfur atom into dethiobiotin via a radical-based mechanism. The chain is Biotin synthase from Lysinibacillus sphaericus (Bacillus sphaericus).